The sequence spans 208 residues: dITP/XTP pyrophosphatase (208 aa).

A substrate-binding site is contributed by 17–22; the sequence is SNNPGK. Mg(2+) contacts are provided by D49 and D78. D78 acts as the Proton acceptor in catalysis. Substrate is bound by residues S79, 164-167, K187, and 192-193; these read FGYD and HR.

Belongs to the HAM1 NTPase family. Homodimer. Requires Mg(2+) as cofactor.

It carries out the reaction XTP + H2O = XMP + diphosphate + H(+). It catalyses the reaction dITP + H2O = dIMP + diphosphate + H(+). The enzyme catalyses ITP + H2O = IMP + diphosphate + H(+). In terms of biological role, pyrophosphatase that catalyzes the hydrolysis of nucleoside triphosphates to their monophosphate derivatives, with a high preference for the non-canonical purine nucleotides XTP (xanthosine triphosphate), dITP (deoxyinosine triphosphate) and ITP. Seems to function as a house-cleaning enzyme that removes non-canonical purine nucleotides from the nucleotide pool, thus preventing their incorporation into DNA/RNA and avoiding chromosomal lesions. The chain is dITP/XTP pyrophosphatase from Burkholderia pseudomallei (strain K96243).